Reading from the N-terminus, the 1070-residue chain is [F-actin]-monooxygenase MICAL1 (1070 aa).

The segment at 1-489 (MASTISTNPA…RDLYDMEAKE (489 aa)) is monooxygenase domain. FAD is bound by residues Cys-95, 114–116 (EKR), 121–123 (RHN), Phe-181, Tyr-293, and Asp-393. Thr-475 is subject to Phosphothreonine. The region spanning 508–612 (VGSQEELLRW…YLSHFHSAFK (105 aa)) is the Calponin-homology (CH) domain. The tract at residues 643–690 (QRTRTQENGEDAGGKKPRLEVKAETPSTEEPPVPKPDEPMTPPSQQQD) is disordered. Positions 646–665 (RTQENGEDAGGKKPRLEVKA) are enriched in basic and acidic residues. Pro residues predominate over residues 671 to 684 (EEPPVPKPDEPMTP). The region spanning 695–757 (DLCALCGQHL…LQHLPQTGHE (63 aa)) is the LIM zinc-binding domain. Zn(2+) is bound by residues Cys-697, Cys-700, His-718, Cys-721, Cys-724, Cys-727, Cys-747, and His-750. Disordered stretches follow at residues 754–838 (TGHE…RSCS) and 865–887 (MEMG…EDVP). A compositionally biased stretch (basic and acidic residues) spans 755-766 (GHEEDSSDRGPE). Over residues 770–781 (LPMSSENNTPSG) the composition is skewed to polar residues. Residues Ser-793, Ser-875, and Ser-876 each carry the phosphoserine modification. Residues 876–887 (SEEETEEEEDVP) show a composition bias toward acidic residues. Positions 904 to 1070 (GTMNNYPTWR…ELASEPGVQG (167 aa)) are important for interaction with RAB8A. The region spanning 921–1070 (KEEEMKRFCK…ELASEPGVQG (150 aa)) is the bMERB domain. Positions 928–1030 (FCKAQAIQRR…EETLKTAADR (103 aa)) form a coiled coil. Ser-1060 is subject to Phosphoserine.

This sequence belongs to the Mical family. In terms of assembly, interacts with STK38 and STK38L. Associates with the SH3 domain of NEDD9. Interacts with VIM and PLXNA3. Interacts with RAB1B, RAB8A, RAB10, RAB13 and RAB15 (in their GTP-bound forms); binding to RAB1B is of low affinity compared to other Rab proteins; at least in case of RAB8A and RAB10 can bind 2 molecules of the Rab proteins simultaneously. Interacts with GRAF1/ARHGAP26, GRAF2/ARHGAP10, RAB8A, RAB8B and RAB10; may bind simultaneously to GRAFs and Rabs and connects GRAFs to Rabs. Does not interact with RAB1 and RAB11A. FAD serves as cofactor.

It localises to the cytoplasm. The protein localises to the cytoskeleton. The protein resides in the endosome membrane. Its subcellular location is the midbody. The catalysed reaction is L-methionyl-[F-actin] + NADPH + O2 + H(+) = L-methionyl-(R)-S-oxide-[F-actin] + NADP(+) + H2O. The enzyme catalyses NADPH + O2 + H(+) = H2O2 + NADP(+). Its function is as follows. Monooxygenase that promotes depolymerization of F-actin by mediating oxidation of specific methionine residues on actin to form methionine-sulfoxide, resulting in actin filament disassembly and preventing repolymerization. In the absence of actin, it also functions as a NADPH oxidase producing H(2)O(2). Acts as a cytoskeletal regulator that connects NEDD9 to intermediate filaments. Also acts as a negative regulator of apoptosis via its interaction with STK38 and STK38L; acts by antagonizing STK38 and STK38L activation by MST1/STK4. Involved in regulation of lamina-specific connectivity in the nervous system such as the development of lamina-restricted hippocampal connections. Through redox regulation of the actin cytoskeleton controls the intracellular distribution of secretory vesicles containing L1/neurofascin/NgCAM family proteins in neurons, thereby regulating their cell surface levels. May act as Rab effector protein and play a role in vesicle trafficking. Promotes endosomal tubule extension by associating with RAB8 (RAB8A or RAB8B), RAB10 and GRAF (GRAF1/ARHGAP26 or GRAF2/ARHGAP10) on the endosomal membrane which may connect GRAFs to Rabs, thereby participating in neosynthesized Rab8-Rab10-Rab11-dependent protein export. The sequence is that of [F-actin]-monooxygenase MICAL1 (MICAL1) from Bos taurus (Bovine).